The primary structure comprises 466 residues: L-seryl-tRNA(Sec) selenium transferase (466 aa).

N6-(pyridoxal phosphate)lysine is present on Lys-292.

It belongs to the SelA family. Pyridoxal 5'-phosphate serves as cofactor.

It is found in the cytoplasm. The catalysed reaction is L-seryl-tRNA(Sec) + selenophosphate + H(+) = L-selenocysteinyl-tRNA(Sec) + phosphate. It functions in the pathway aminoacyl-tRNA biosynthesis; selenocysteinyl-tRNA(Sec) biosynthesis; selenocysteinyl-tRNA(Sec) from L-seryl-tRNA(Sec) (bacterial route): step 1/1. Its function is as follows. Converts seryl-tRNA(Sec) to selenocysteinyl-tRNA(Sec) required for selenoprotein biosynthesis. The sequence is that of L-seryl-tRNA(Sec) selenium transferase from Rhizobium meliloti (strain 1021) (Ensifer meliloti).